An 878-amino-acid polypeptide reads, in one-letter code: MTVTLPSVYSPQEVERKWYKYWEENGFFHTEPDEREPFCIVMPPPNVTGQLHMGHALDNTMQDILARYKRMQGFNTLWLPGTDHAGIATQAKVEEELRKEGLTKDDLGREKFLERVWAWKENYGNRITEQLRTLGASCDWKRERFTLDEGCSEAVKEVFLRLYEKGLIYRDYYITNWCPHCKTTISDIEVEHLEREGKLYYINYPLEDGSGYLTVATTRPETMLGDTAVAVHPEDERYRELIGKNVILPLVNRPIPVIADEYVDKEFGTGAVKITPAHDPNDFEVGLRHKLPQVVVLDDDAVMNENAGKYRGLDRYEARKKIVEDLKDLGLLVKEEEITHSVGHCYRCDTVIEPRLSKQWFVKMKPLAEPAIEAALTGKVKFVPERFTKIYLNWLYNIRDWCISRQLWWGHRIPVWYCDECGEVIPSREEVKSCPKCQSTKVHQDPDVLDTWFSSALWPFSTLGWPQNTEELKYYYPTSVLVTGRDIIFFWVARMLFMGLEFMKEVPFKEVLIHGLVLDAQGRKMSKSLGNGVDPVEVIASHGADSLRFMLVTGNTPGNDLRFHFERLDGARNFANKLWNASRFVLMNLEGFTPQGIKQEELTLADRWILARLNAVIDRVTAFLDEYELGEAARELYEFIWDEFCDWYVELTKPRLYGKMPGGDTAREVLYAVLKTTLELLHPFMPFITEEIWQRLPHEGKTIMLAPWPKGRADYENPEAVKQMSSLMEVIREIRRLRAEVNVPPAKRGEVILVTADEQLTRLLNENAWAIAALAQSEPRVVPKMEVPQGALTGVAAGVTIYLPLKDLIDLEKEKERLNKELKKVLAEIERLNQKLNNPGFLAKAPAEVVNKEREKLTAFYREKEVLEQRIGMLSHEL.

The short motif at 45-55 (PNVTGQLHMGH) is the 'HIGH' region element. The short motif at 524 to 528 (KMSKS) is the 'KMSKS' region element. Position 527 (Lys-527) interacts with ATP. Residues 804–871 (PLKDLIDLEK…REKEVLEQRI (68 aa)) are a coiled coil.

It belongs to the class-I aminoacyl-tRNA synthetase family. ValS type 1 subfamily. Monomer.

Its subcellular location is the cytoplasm. The enzyme catalyses tRNA(Val) + L-valine + ATP = L-valyl-tRNA(Val) + AMP + diphosphate. Functionally, catalyzes the attachment of valine to tRNA(Val). As ValRS can inadvertently accommodate and process structurally similar amino acids such as threonine, to avoid such errors, it has a 'posttransfer' editing activity that hydrolyzes mischarged Thr-tRNA(Val) in a tRNA-dependent manner. This Carboxydothermus hydrogenoformans (strain ATCC BAA-161 / DSM 6008 / Z-2901) protein is Valine--tRNA ligase.